Consider the following 95-residue polypeptide: Large ribosomal subunit protein bL25 (95 aa).

The protein belongs to the bacterial ribosomal protein bL25 family. As to quaternary structure, part of the 50S ribosomal subunit; part of the 5S rRNA/L5/L18/L25 subcomplex. Contacts the 5S rRNA. Binds to the 5S rRNA independently of L5 and L18.

Its function is as follows. This is one of the proteins that binds to the 5S RNA in the ribosome where it forms part of the central protuberance. This is Large ribosomal subunit protein bL25 from Haemophilus influenzae (strain 86-028NP).